Consider the following 626-residue polypeptide: MSETVERHEFGAEVGRLLDLVVHALYSDREIFLRELVANAADATDRRRFEALTNEALALPSDARVLIAPDKAARTLTISDAGIGMSKEDLAQNLGTIARSGTRAFSQALGERAAEGGEDQRPSLIGQFGVGFYSAFMVADRVTVTSRRAGSEEAWTWASDGKGSYTLEPASREQPGTDIVLHMKEDADEYLESYRLDHVVRKWADNIAVPIAIRDAEGKEEAANRGTALWRKPKSEITEEQYKEFYRTVSHGFDEPWATLHWRAEGALEFTGLLFVPSMKPFMPMEDDRRSKVRLHVRRMFITDEAELLPNWLRFVHGVVDTDDLPLNVSREMLQSTPTLQKIRRAVTTRVINELSSRSKNAEKAEEYQKFFENFGPVLKEGIYEDFERRGEIAPLLRFRSSTEGGWTSLPEYVARMKPEQEAIYYLVADDVEALKNSAQLEGFRARGVEVLLLSDHVDAFWPEQLGKFEDKPLRSVTQGSADLAKLKPEGETAEAAPALDTLVAALKLALEPDVSDVRTTDRLVDSAVVLATSGMGPDLQMQRLLRRAGRGFGGSAPILEINPRHALIRSLNERAEAGEDLKAEAGTLLDLARVQDGDTPRDPVAFARAVAAALAGTAAKPAESA.

An a; substrate-binding region spans residues 1–331 (MSETVERHEF…TDDLPLNVSR (331 aa)). The interval 332–544 (EMLQSTPTLQ…GMGPDLQMQR (213 aa)) is b. Residues 545 to 626 (LLRRAGRGFG…GTAAKPAESA (82 aa)) form a c region.

It belongs to the heat shock protein 90 family. In terms of assembly, homodimer.

The protein localises to the cytoplasm. Its function is as follows. Molecular chaperone. Has ATPase activity. The chain is Chaperone protein HtpG from Methylorubrum extorquens (strain PA1) (Methylobacterium extorquens).